A 332-amino-acid chain; its full sequence is L-lactate dehydrogenase A chain (332 aa).

N6-acetyllysine; alternate is present on Lys-5. Lys-5 is subject to N6-succinyllysine; alternate. Lys-14 carries the post-translational modification N6-acetyllysine. Thr-18 is modified (phosphothreonine). 29 to 57 (GAVGMACAISILMKDLADELALVDVIEDK) serves as a coordination point for NAD(+). Lys-57 bears the N6-acetyllysine; alternate mark. Residue Lys-57 forms a Glycyl lysine isopeptide (Lys-Gly) (interchain with G-Cter in SUMO2); alternate linkage. Lys-81 is subject to N6-acetyllysine. An NAD(+)-binding site is contributed by Arg-99. Arg-106 contacts substrate. The residue at position 118 (Lys-118) is an N6-acetyllysine; alternate. Position 118 is an N6-succinyllysine; alternate (Lys-118). Residue Lys-126 is modified to N6-acetyllysine. Asn-138 serves as a coordination point for NAD(+). Substrate-binding residues include Asn-138 and Arg-169. The active-site Proton acceptor is the His-193. Residue Lys-232 is modified to N6-acetyllysine. Tyr-239 carries the post-translational modification Phosphotyrosine. Position 243 is an N6-acetyllysine (Lys-243). Substrate is bound at residue Thr-248. Phosphothreonine occurs at positions 309 and 322.

Belongs to the LDH/MDH superfamily. LDH family. In terms of assembly, homotetramer. Interacts with PTEN upstream reading frame protein MP31. Post-translationally, ISGylated.

It localises to the cytoplasm. The enzyme catalyses (S)-lactate + NAD(+) = pyruvate + NADH + H(+). The protein operates within fermentation; pyruvate fermentation to lactate; (S)-lactate from pyruvate: step 1/1. In terms of biological role, interconverts simultaneously and stereospecifically pyruvate and lactate with concomitant interconversion of NADH and NAD(+). This Monodelphis domestica (Gray short-tailed opossum) protein is L-lactate dehydrogenase A chain (LDHA).